Consider the following 413-residue polypeptide: Cell surface GPI-anchored protein ECM33 (413 aa).

An N-terminal signal peptide occupies residues Met-1–Ala-20. Residues Asn-93, Asn-102, Asn-172, Asn-209, Asn-222, Asn-227, Asn-279, Asn-290, Asn-306, Asn-322, and Asn-382 are each glycosylated (N-linked (GlcNAc...) asparagine). The disordered stretch occupies residues Tyr-347 to Gly-390. The segment covering Ser-356–Gly-390 has biased composition (low complexity). Gly-390 carries the GPI-anchor amidated glycine lipid modification. The propeptide at Ala-391–Ile-413 is removed in mature form.

Belongs to the SPS2 family.

Its subcellular location is the cell membrane. The protein resides in the secreted. It localises to the cell wall. In terms of biological role, cell surface protein required for proper cell wall integrity and for the correct assembly of the mannoprotein outer layer of the cell wall. The sequence is that of Cell surface GPI-anchored protein ECM33 (ECM331) from Candida albicans (strain SC5314 / ATCC MYA-2876) (Yeast).